A 549-amino-acid chain; its full sequence is DDB1- and CUL4-associated factor 11 (549 aa).

The segment covering M1–G24 has biased composition (low complexity). The interval M1–V40 is disordered. S73 and S75 each carry phosphoserine. A compositionally biased stretch (basic and acidic residues) spans D80–D89. A disordered region spans residues D80–D100. 7 WD repeats span residues T170–K210, D216–D258, E263–Q302, S305–P345, G353–G392, G435–T480, and N481–D520.

In terms of assembly, interacts with DDB1 and CUL4A.

Its pathway is protein modification; protein ubiquitination. Its function is as follows. May function as a substrate receptor for CUL4-DDB1 E3 ubiquitin-protein ligase complex. This Rattus norvegicus (Rat) protein is DDB1- and CUL4-associated factor 11 (Dcaf11).